An 86-amino-acid polypeptide reads, in one-letter code: Small ribosomal subunit protein bS20 (86 aa).

Positions M1 to A22 are enriched in basic residues. Positions M1 to M28 are disordered.

The protein belongs to the bacterial ribosomal protein bS20 family.

Binds directly to 16S ribosomal RNA. This Serratia proteamaculans (strain 568) protein is Small ribosomal subunit protein bS20.